We begin with the raw amino-acid sequence, 179 residues long: Inorganic pyrophosphatase (179 aa).

The substrate site is built by Lys-30, Arg-44, and Tyr-56. Mg(2+)-binding residues include Asp-66, Asp-71, and Asp-103. Residue Tyr-143 coordinates substrate.

This sequence belongs to the PPase family. Homohexamer. The cofactor is Mg(2+).

It is found in the cytoplasm. The enzyme catalyses diphosphate + H2O = 2 phosphate + H(+). Its function is as follows. Catalyzes the hydrolysis of inorganic pyrophosphate (PPi) forming two phosphate ions. This Wigglesworthia glossinidia brevipalpis protein is Inorganic pyrophosphatase.